We begin with the raw amino-acid sequence, 1442 residues long: DNA polymerase III PolC-type (1442 aa).

The Exonuclease domain occupies 426-582; that stretch reads YVVFDVETTG…YDTEATAYIF (157 aa).

Belongs to the DNA polymerase type-C family. PolC subfamily.

It localises to the cytoplasm. The catalysed reaction is DNA(n) + a 2'-deoxyribonucleoside 5'-triphosphate = DNA(n+1) + diphosphate. In terms of biological role, required for replicative DNA synthesis. This DNA polymerase also exhibits 3' to 5' exonuclease activity. The protein is DNA polymerase III PolC-type of Staphylococcus epidermidis (strain ATCC 12228 / FDA PCI 1200).